Here is a 476-residue protein sequence, read N- to C-terminus: Protein transport protein Sec61 subunit alpha isoform B (476 aa).

At glycine 2 to leucine 33 the chain is on the cytoplasmic side. The helical transmembrane segment at tryptophan 34–isoleucine 53 threads the bilayer. The Lumenal portion of the chain corresponds to methionine 54 to leucine 76. The helical transmembrane segment at methionine 77–glycine 96 threads the bilayer. Residues alanine 97–lysine 117 are Cytoplasmic-facing. Residues leucine 118–glycine 138 form a helical membrane-spanning segment. Residues aspartate 139–glycine 144 lie on the Lumenal side of the membrane. The chain crosses the membrane as a helical span at residues alanine 145–leucine 165. Residues aspartate 166–glycine 172 are Cytoplasmic-facing. The chain crosses the membrane as a helical span at residues tyrosine 173–tryptophan 193. Residues lysine 194 to proline 240 are Lumenal-facing. The chain crosses the membrane as a helical span at residues asparagine 241–phenylalanine 261. Residues arginine 262–asparagine 288 are Cytoplasmic-facing. The helical transmembrane segment at isoleucine 289–serine 309 threads the bilayer. The Lumenal segment spans residues threonine 310–valine 354. A helical transmembrane segment spans residues leucine 355–phenylalanine 375. The Cytoplasmic segment spans residues serine 376 to alanine 420. The chain crosses the membrane as a helical span at residues alanine 421–isoleucine 441. Over glycine 442 to threonine 445 the chain is Lumenal. The helical transmembrane segment at glycine 446–valine 462 threads the bilayer. Topologically, residues lysine 463 to phenylalanine 476 are cytoplasmic.

This sequence belongs to the SecY/SEC61-alpha family. In terms of assembly, the SEC61 channel-forming translocon complex consists of channel-forming core components SEC61A1, SEC61B and SEC61G and different auxiliary components such as SEC62 and SEC63.

Its subcellular location is the endoplasmic reticulum membrane. In terms of biological role, component of SEC61 channel-forming translocon complex that mediates transport of signal peptide-containing precursor polypeptides across the endoplasmic reticulum (ER). Forms a ribosome receptor and a gated pore in the ER membrane, both functions required for cotranslational translocation of nascent polypeptides. The sequence is that of Protein transport protein Sec61 subunit alpha isoform B (sec61ab) from Oncorhynchus mykiss (Rainbow trout).